A 234-amino-acid chain; its full sequence is ATP synthase subunit a 1 (234 aa).

The next 6 membrane-spanning stretches (helical) occupy residues 29–49, 90–110, 116–136, 147–167, 186–206, and 207–227; these read FLVH…VALL, LIAT…IPGF, NLNT…VVGV, FVGP…IGHL, IVLV…MMLM, and GILV…IYIA.

It belongs to the ATPase A chain family. In terms of assembly, F-type ATPases have 2 components, CF(1) - the catalytic core - and CF(0) - the membrane proton channel. CF(1) has five subunits: alpha(3), beta(3), gamma(1), delta(1), epsilon(1). CF(0) has three main subunits: a(1), b(2) and c(9-12). The alpha and beta chains form an alternating ring which encloses part of the gamma chain. CF(1) is attached to CF(0) by a central stalk formed by the gamma and epsilon chains, while a peripheral stalk is formed by the delta and b chains.

Its subcellular location is the cell inner membrane. Functionally, key component of the proton channel; it plays a direct role in the translocation of protons across the membrane. This Syntrophotalea carbinolica (strain DSM 2380 / NBRC 103641 / GraBd1) (Pelobacter carbinolicus) protein is ATP synthase subunit a 1.